We begin with the raw amino-acid sequence, 170 residues long: Universal stress protein MJ0531 (170 aa).

It belongs to the universal stress protein A family.

This chain is Universal stress protein MJ0531, found in Methanocaldococcus jannaschii (strain ATCC 43067 / DSM 2661 / JAL-1 / JCM 10045 / NBRC 100440) (Methanococcus jannaschii).